The sequence spans 263 residues: Small ribosomal subunit protein eS4, Y isoform 2 (263 aa).

Residues 42–104 enclose the S4 RNA-binding domain; the sequence is LPLIVFLRNR…TGEHFRLVYN (63 aa).

The protein belongs to the eukaryotic ribosomal protein eS4 family.

In Homo sapiens (Human), this protein is Small ribosomal subunit protein eS4, Y isoform 2 (RPS4Y2).